The chain runs to 519 residues: Iroquois-class homeodomain protein IRX-4 (519 aa).

Positions 143-204 (GTRRKNATRE…NARRRLKKEN (62 aa)) form a DNA-binding region, homeobox; TALE-type. A disordered region spans residues 204–298 (NKMTWPPRNK…VPAAPDGPVK (95 aa)). The segment covering 213 to 222 (KCADEKRPYA) has biased composition (basic and acidic residues). Composition is skewed to acidic residues over residues 223–235 (EGEE…EEAR) and 257–267 (LSDLDDFDPLE).

Belongs to the TALE/IRO homeobox family. Interacts with the vitamin D receptor VDR but doesn't affect its transactivation activity. Predominantly expressed in cardiac ventricles.

The protein resides in the nucleus. Its function is as follows. Likely to be an important mediator of ventricular differentiation during cardiac development. The polypeptide is Iroquois-class homeodomain protein IRX-4 (IRX4) (Homo sapiens (Human)).